The primary structure comprises 160 residues: Cyclic pyranopterin monophosphate synthase (160 aa).

Residues 74 to 76 (LSH) and 112 to 113 (ME) each bind substrate. D127 is a catalytic residue.

It belongs to the MoaC family. In terms of assembly, homohexamer; trimer of dimers.

The catalysed reaction is (8S)-3',8-cyclo-7,8-dihydroguanosine 5'-triphosphate = cyclic pyranopterin phosphate + diphosphate. It functions in the pathway cofactor biosynthesis; molybdopterin biosynthesis. Catalyzes the conversion of (8S)-3',8-cyclo-7,8-dihydroguanosine 5'-triphosphate to cyclic pyranopterin monophosphate (cPMP). This Trichlorobacter lovleyi (strain ATCC BAA-1151 / DSM 17278 / SZ) (Geobacter lovleyi) protein is Cyclic pyranopterin monophosphate synthase.